The sequence spans 446 residues: Coagulation factor VII (446 aa).

Residues M1–A24 form the signal peptide. A propeptide spanning residues V25–R41 is cleaved from the precursor. Positions A42 to S86 constitute a Gla domain. 4-carboxyglutamate occurs at positions 47, 48, 55, 57, 60, 61, 66, 67, 70, and 76. C58 and C63 are oxidised to a cystine. The region spanning D87–E123 is the EGF-like 1; calcium-binding domain. 10 disulfide bridges follow: C91-C102, C96-C111, C113-C122, C132-C143, C139-C153, C155-C168, C176-C303, C200-C205, C219-C235, and C351-C370. Residue S93 is glycosylated (O-linked (Glc...) serine; alternate). O-linked (Xyl...) serine; alternate glycosylation is present at S93. D104 bears the (3R)-3-hydroxyaspartate mark. Residues E128 to K169 form the EGF-like 2 domain. An N-linked (GlcNAc...) asparagine glycan is attached at N186. The region spanning I194–D433 is the Peptidase S1 domain. H234 serves as the catalytic Charge relay system. N-linked (GlcNAc...) asparagine glycosylation is present at N244. The active-site Charge relay system is the D283. D379 serves as a coordination point for substrate. A disulfide bridge links C381 with C409. The active-site Charge relay system is S385.

This sequence belongs to the peptidase S1 family. In terms of assembly, heterodimer of a light chain and a heavy chain linked by a disulfide bond. In terms of processing, the vitamin K-dependent, enzymatic carboxylation of some glutamate residues allows the modified protein to bind calcium. The iron and 2-oxoglutarate dependent 3-hydroxylation of aspartate and asparagine is (R) stereospecific within EGF domains. Post-translationally, can be either O-glucosylated or O-xylosylated at Ser-93 by POGLUT1. Plasma and liver.

It is found in the secreted. It catalyses the reaction Selective cleavage of Arg-|-Ile bond in factor X to form factor Xa.. Initiates the extrinsic pathway of blood coagulation. Serine protease that circulates in the blood in a zymogen form. Factor VII is converted to factor VIIa by factor Xa, factor XIIa, factor IXa, or thrombin by minor proteolysis. In the presence of tissue factor and calcium ions, factor VIIa then converts factor X to factor Xa by limited proteolysis. Factor VIIa also converts factor IX to factor IXa in the presence of tissue factor and calcium. The protein is Coagulation factor VII (F7) of Mus musculus (Mouse).